Reading from the N-terminus, the 764-residue chain is Complement factor B (764 aa).

An N-terminal signal peptide occupies residues 1-25; that stretch reads MGSNLSPQLCLMPFILGLLSGGVTT. Sushi domains are found at residues 35 to 100, 101 to 160, and 163 to 220; these read ESCS…ECRA, IHCP…ICDN, and GYCS…SCQD. Cystine bridges form between Cys37–Cys76, Cys62–Cys98, Cys103–Cys145, Cys131–Cys158, Cys165–Cys205, and Cys191–Cys218. 2 N-linked (GlcNAc...) asparagine glycosylation sites follow: Asn122 and Asn142. The 200-residue stretch at 270–469 folds into the VWFA domain; sequence NIYLVLDGSD…NLEDVFYQMI (200 aa). Residues Ser278 and Ser280 each contribute to the Mg(2+) site. Asn285 carries N-linked (GlcNAc...) asparagine glycosylation. Thr353 serves as a coordination point for Mg(2+). A glycan (N-linked (GlcNAc...) asparagine) is linked at Asn378. The Peptidase S1 domain maps to 477-757; that stretch reads LCGMVWEHRK…VLPWLKEKLQ (281 aa). Intrachain disulfides connect Cys478-Cys596, Cys511-Cys527, Cys599-Cys615, Cys656-Cys682, and Cys695-Cys725. Catalysis depends on charge relay system residues His526 and Asp576. Ser699 functions as the Charge relay system in the catalytic mechanism.

This sequence belongs to the peptidase S1 family. Monomer. Interacts with complement C3b; this interaction is dependent on the presence of Mg(2+). As to quaternary structure, catalytic component of the C3 convertase of the alternative complement pathway, also named C3bBb, composed of complement factor B Bb and complement C3b. Catalytic component of the C5 convertase of the alternative complement pathway, also named C3bBb3b, composed of complement factor B Bb and additional molecules of complement C3b. Interacts to CFP; this interaction contributes to the stabilization of the active C3-convertase enzyme complex. Mg(2+) is required as a cofactor. It depends on Mn(2+) as a cofactor. Post-translationally, cleaved by CFD following activation of the alternative complement system, generating Ba and Bb chains. Cleavage and activation takes place when CFB is already associated with complement C3b.

The protein localises to the secreted. Its subcellular location is the cell surface. It catalyses the reaction Cleavage of Arg-|-Ser bond in complement component C3 alpha-chain to yield C3a and C3b, and Arg-|-Xaa bond in complement component C5 alpha-chain to yield C5a and C5b.. Functionally, precursor of the catalytic component of the C3 and C5 convertase complexes of the alternative pathway of the complement system, a cascade of proteins that leads to phagocytosis and breakdown of pathogens and signaling that strengthens the adaptive immune system. The alternative complement pathway acts as an amplification loop that enhances other complement pathways (classical, lectin and GZMK) by promoting formation of additional C3 and C5 convertases. CFB is cleaved and activated by CFD to generate Ba and Bb chains; Bb chain constituting the catalytic component of the C3 and C5 convertases. In terms of biological role, serine protease component of the complement C3 and C5 convertase complexes of the alternative complement pathway. Following cleavage and activation by factor D (CFD), forms the C3 convertase together with complement C3b. As part of the C3 convertase, cleaves and activates C3 into C3a anaphylatoxin and C3b opsonin, the next components of the complement pathways. When an additional complement C3b molecule binds to the C3 convertase, forms the C5 convertase, which cleaves and activates C5 into C5a anaphylatoxin and C5b component of the membrane attack complex. Its function is as follows. Involved in proliferation and differentiation of preactivated B-lymphocytes, rapid spreading of peripheral blood monocytes, stimulation of lymphocyte blastogenesis and lysis of erythrocytes. This Pan troglodytes (Chimpanzee) protein is Complement factor B (CFB).